Here is a 448-residue protein sequence, read N- to C-terminus: UDP-N-acetylmuramoylalanine--D-glutamate ligase (448 aa).

UDP-N-acetyl-alpha-D-muramoyl-L-alanine is bound by residues Lys-17, Ser-18, Thr-38, Arg-39, and Gly-78. Position 116-122 (116-122) interacts with ATP; sequence GSNAKST. Residues Ala-119, Lys-120, Ser-121, and Thr-122 each contribute to the ADP site. The UDP-N-acetyl-alpha-D-muramoyl-L-alanine site is built by Asn-143 and His-188. ADP contacts are provided by Asn-278, Arg-309, Asp-324, and Lys-326.

This sequence belongs to the MurCDEF family.

The protein localises to the cytoplasm. The catalysed reaction is UDP-N-acetyl-alpha-D-muramoyl-L-alanine + D-glutamate + ATP = UDP-N-acetyl-alpha-D-muramoyl-L-alanyl-D-glutamate + ADP + phosphate + H(+). It functions in the pathway cell wall biogenesis; peptidoglycan biosynthesis. In terms of biological role, involved in cell wall formation. Catalyzes the addition of D-glutamate to the peptidoglycan precursor UDP-N-acetylmuramoyl-L-alanine (UMA). The protein is UDP-N-acetylmuramoylalanine--D-glutamate ligase of Pseudomonas aeruginosa (strain ATCC 15692 / DSM 22644 / CIP 104116 / JCM 14847 / LMG 12228 / 1C / PRS 101 / PAO1).